The chain runs to 154 residues: 17.0 kDa class II heat shock protein (154 aa).

The 116-residue stretch at 39–154 (DARAMAATPA…KPKTIEIKVA (116 aa)) folds into the sHSP domain.

This sequence belongs to the small heat shock protein (HSP20) family.

The protein resides in the cytoplasm. The polypeptide is 17.0 kDa class II heat shock protein (HSP18) (Zea mays (Maize)).